The following is a 141-amino-acid chain: Lutropin subunit beta (141 aa).

Residues 1 to 20 form the signal peptide; the sequence is MEMLQGLLLWLLLSVGGVWA. 6 cysteine pairs are disulfide-bonded: Cys-29–Cys-77, Cys-43–Cys-92, Cys-46–Cys-130, Cys-54–Cys-108, Cys-58–Cys-110, and Cys-113–Cys-120. A glycan (N-linked (GlcNAc...) asparagine) is linked at Asn-33.

The protein belongs to the glycoprotein hormones subunit beta family. In terms of assembly, heterodimer of a common alpha chain and a unique beta chain which confers biological specificity to thyrotropin, lutropin, follitropin and gonadotropin.

The protein localises to the secreted. Promotes spermatogenesis and ovulation by stimulating the testes and ovaries to synthesize steroids. This is Lutropin subunit beta (LHB1) from Ceratotherium simum (White rhinoceros).